We begin with the raw amino-acid sequence, 372 residues long: 4-hydroxy-3-methylbut-2-en-1-yl diphosphate synthase (flavodoxin) (372 aa).

[4Fe-4S] cluster-binding residues include Cys270, Cys273, Cys305, and Glu312.

This sequence belongs to the IspG family. Requires [4Fe-4S] cluster as cofactor.

It catalyses the reaction (2E)-4-hydroxy-3-methylbut-2-enyl diphosphate + oxidized [flavodoxin] + H2O + 2 H(+) = 2-C-methyl-D-erythritol 2,4-cyclic diphosphate + reduced [flavodoxin]. The protein operates within isoprenoid biosynthesis; isopentenyl diphosphate biosynthesis via DXP pathway; isopentenyl diphosphate from 1-deoxy-D-xylulose 5-phosphate: step 5/6. Converts 2C-methyl-D-erythritol 2,4-cyclodiphosphate (ME-2,4cPP) into 1-hydroxy-2-methyl-2-(E)-butenyl 4-diphosphate. The chain is 4-hydroxy-3-methylbut-2-en-1-yl diphosphate synthase (flavodoxin) from Salmonella arizonae (strain ATCC BAA-731 / CDC346-86 / RSK2980).